Reading from the N-terminus, the 210-residue chain is Large ribosomal subunit protein uL3 (210 aa).

The protein belongs to the universal ribosomal protein uL3 family. In terms of assembly, part of the 50S ribosomal subunit. Forms a cluster with proteins L14 and L19.

In terms of biological role, one of the primary rRNA binding proteins, it binds directly near the 3'-end of the 23S rRNA, where it nucleates assembly of the 50S subunit. In Solibacter usitatus (strain Ellin6076), this protein is Large ribosomal subunit protein uL3.